Consider the following 336-residue polypeptide: tRNA N6-adenosine threonylcarbamoyltransferase (336 aa).

Residues histidine 114 and histidine 118 each contribute to the Fe cation site. Substrate is bound by residues 136-140 (LVSGG), aspartate 169, glycine 182, aspartate 186, and asparagine 275. Aspartate 301 contributes to the Fe cation binding site.

Belongs to the KAE1 / TsaD family. Fe(2+) serves as cofactor.

Its subcellular location is the cytoplasm. The enzyme catalyses L-threonylcarbamoyladenylate + adenosine(37) in tRNA = N(6)-L-threonylcarbamoyladenosine(37) in tRNA + AMP + H(+). Its function is as follows. Required for the formation of a threonylcarbamoyl group on adenosine at position 37 (t(6)A37) in tRNAs that read codons beginning with adenine. Is involved in the transfer of the threonylcarbamoyl moiety of threonylcarbamoyl-AMP (TC-AMP) to the N6 group of A37, together with TsaE and TsaB. TsaD likely plays a direct catalytic role in this reaction. In Streptococcus pneumoniae serotype 2 (strain D39 / NCTC 7466), this protein is tRNA N6-adenosine threonylcarbamoyltransferase.